The following is a 508-amino-acid chain: Photosystem II CP47 reaction center protein (508 aa).

The next 6 helical transmembrane spans lie at 21–36 (SVHI…WAGS), 101–115 (IVFS…IWHW), 140–156 (GIHL…FGAF), 203–218 (IAAG…FHLS), 237–252 (VLSS…AFVV), and 457–472 (SFAL…HGAR).

It belongs to the PsbB/PsbC family. PsbB subfamily. As to quaternary structure, PSII is composed of 1 copy each of membrane proteins PsbA, PsbB, PsbC, PsbD, PsbE, PsbF, PsbH, PsbI, PsbJ, PsbK, PsbL, PsbM, PsbT, PsbX, PsbY, PsbZ, Psb30/Ycf12, at least 3 peripheral proteins of the oxygen-evolving complex and a large number of cofactors. It forms dimeric complexes. The cofactor is Binds multiple chlorophylls. PSII binds additional chlorophylls, carotenoids and specific lipids..

It is found in the plastid. The protein localises to the chloroplast thylakoid membrane. In terms of biological role, one of the components of the core complex of photosystem II (PSII). It binds chlorophyll and helps catalyze the primary light-induced photochemical processes of PSII. PSII is a light-driven water:plastoquinone oxidoreductase, using light energy to abstract electrons from H(2)O, generating O(2) and a proton gradient subsequently used for ATP formation. This Panax ginseng (Korean ginseng) protein is Photosystem II CP47 reaction center protein.